The sequence spans 276 residues: Glucosamine-6-phosphate deaminase 2 (276 aa).

Asp72 serves as the catalytic Proton acceptor; for enolization step. A coiled-coil region spans residues 106–130; it reads ILDGNATDLQAECDAFEKKIKEAGG. Asp141 (for ring-opening step) is an active-site residue. Catalysis depends on His143, which acts as the Proton acceptor; for ring-opening step. Glu148 serves as the catalytic For ring-opening step. Position 161 is a phosphothreonine (Thr161).

The protein belongs to the glucosamine/galactosamine-6-phosphate isomerase family. As to quaternary structure, homohexamer.

The protein resides in the cytoplasm. The enzyme catalyses alpha-D-glucosamine 6-phosphate + H2O = beta-D-fructose 6-phosphate + NH4(+). Its pathway is nucleotide-sugar biosynthesis; UDP-N-acetyl-alpha-D-glucosamine biosynthesis; alpha-D-glucosamine 6-phosphate from D-fructose 6-phosphate: step 1/1. Its activity is regulated as follows. Allosterically activated by N-acetylglucosamine-6-phosphate (GlcNAc6P). In terms of biological role, catalyzes the reversible conversion of alpha-D-glucosamine 6-phosphate (GlcN-6P) into beta-D-fructose 6-phosphate (Fru-6P) and ammonium ion, a regulatory reaction step in de novo uridine diphosphate-N-acetyl-alpha-D-glucosamine (UDP-GlcNAc) biosynthesis via hexosamine pathway. Deamination is coupled to aldo-keto isomerization mediating the metabolic flux from UDP-GlcNAc toward Fru-6P. At high ammonium level can drive amination and isomerization of Fru-6P toward hexosamines and UDP-GlcNAc synthesis. Has a role in fine tuning the metabolic fluctuations of cytosolic UDP-GlcNAc and their effects on hyaluronan synthesis that occur during tissue remodeling. The chain is Glucosamine-6-phosphate deaminase 2 from Bos taurus (Bovine).